Reading from the N-terminus, the 341-residue chain is uncharacterized protein (341 aa).

The next 4 helical transmembrane spans lie at 8 to 28 (LMLT…PLII), 63 to 83 (LMYF…VFAL), 171 to 191 (IYIM…IALS), and 317 to 337 (EFLV…KIFL). The VWFA domain occupies 101–305 (DIVIVLDISP…SKKENLERKI (205 aa)).

Its subcellular location is the cell membrane. This is an uncharacterized protein from Borreliella burgdorferi (strain ATCC 35210 / DSM 4680 / CIP 102532 / B31) (Borrelia burgdorferi).